The primary structure comprises 443 residues: Ribosomal protein uS12 methylthiotransferase RimO (443 aa).

The MTTase N-terminal domain maps to 5 to 115 (PNIGFISLGC…VMKHVHKYVP (111 aa)). [4Fe-4S] cluster-binding residues include Cys14, Cys50, Cys79, Cys147, Cys151, and Cys154. The region spanning 133–374 (LTPKHYAYLK…MQLQQKISAE (242 aa)) is the Radical SAM core domain. The 67-residue stretch at 377–443 (RQKIGRTLSV…ADEYDLWGEI (67 aa)) folds into the TRAM domain.

Belongs to the methylthiotransferase family. RimO subfamily. [4Fe-4S] cluster is required as a cofactor.

The protein resides in the cytoplasm. It carries out the reaction L-aspartate(89)-[ribosomal protein uS12]-hydrogen + (sulfur carrier)-SH + AH2 + 2 S-adenosyl-L-methionine = 3-methylsulfanyl-L-aspartate(89)-[ribosomal protein uS12]-hydrogen + (sulfur carrier)-H + 5'-deoxyadenosine + L-methionine + A + S-adenosyl-L-homocysteine + 2 H(+). Its function is as follows. Catalyzes the methylthiolation of an aspartic acid residue of ribosomal protein uS12. This is Ribosomal protein uS12 methylthiotransferase RimO from Histophilus somni (strain 2336) (Haemophilus somnus).